Here is a 219-residue protein sequence, read N- to C-terminus: Uracil-DNA glycosylase (219 aa).

Asp61 (proton acceptor) is an active-site residue.

This sequence belongs to the uracil-DNA glycosylase (UDG) superfamily. UNG family.

The protein resides in the cytoplasm. It catalyses the reaction Hydrolyzes single-stranded DNA or mismatched double-stranded DNA and polynucleotides, releasing free uracil.. Functionally, excises uracil residues from the DNA which can arise as a result of misincorporation of dUMP residues by DNA polymerase or due to deamination of cytosine. The sequence is that of Uracil-DNA glycosylase from Neisseria meningitidis serogroup B (strain ATCC BAA-335 / MC58).